The primary structure comprises 646 residues: Zinc finger protein 493 (646 aa).

The C2H2-type 1; degenerate zinc-finger motif lies at 26–48 (FQCDKYVKVFHKLLNSNRHNTKH). 2 C2H2-type zinc fingers span residues 54–76 (FKCK…KRIH) and 82–104 (YRCE…RRVH). Residues 109 to 131 (SYKYECGKSFNQDSNLTTHKRIH) form a C2H2-type 4; degenerate zinc finger. Residues 137–159 (YKCEECGTSFYQFSYLTRHKLIH) form a C2H2-type 5 zinc finger. The segment at 165 to 187 (YKCEQYGKTFNQSSTLTGHKIIH) adopts a C2H2-type 6; degenerate zinc-finger fold. A C2H2-type 7; degenerate zinc finger spans residues 193 to 215 (YKCEECGKAFSIFSTPTKHKIIH). The C2H2-type 8; degenerate zinc finger occupies 221–243 (HRCEEYCKAYKESSHLTTHKRIH). 14 C2H2-type zinc fingers span residues 249 to 271 (YKCE…KIIH), 277 to 299 (HRCE…KRIH), 305 to 327 (YKCE…KIIH), 333 to 355 (YKCE…RIIH), 361 to 383 (YKCE…KIIH), 389 to 411 (YKCE…KMIH), 417 to 439 (YKCE…KRIH), 445 to 467 (YKCK…KIIH), 473 to 495 (YKCE…KKIH), 501 to 523 (YKCE…KQIH), 529 to 551 (YKCE…KIIH), 557 to 579 (YKCE…KIIH), 585 to 607 (CKCE…KLIH), and 613 to 635 (YKCE…KIIH).

The protein localises to the nucleus. May be involved in transcriptional regulation. This chain is Zinc finger protein 493 (ZNF493), found in Homo sapiens (Human).